Reading from the N-terminus, the 2303-residue chain is Genome polyprotein (2303 aa).

A zinc finger spans residues 3–14; it reads CKHGYPDVCPIC. An acidic region spans residues 30–46; it reads DGEWFPTDLLCVDLDDD. The theilo stretch occupies residues 60 to 73; it reads MEWTDVPLVCDTVM. The segment at 73-93 is disordered; sequence MEPQGNASSSDKSNSQSSGNE. Residue G77 is the site of N-myristoyl glycine; by host attachment. Over residues 80 to 90 the composition is skewed to low complexity; it reads SSSDKSNSQSS. A disulfide bond links C501 and C503. The segment at 1041–1047 is host EIF4E binding; it reads YYKQRLI. The SF3 helicase domain maps to 1283–1448; the sequence is IPLASLCEKF…CKTPAGMLDI (166 aa). An ATP-binding site is contributed by 1312-1319; that stretch reads GAAGQGKS. Y1608 carries the O-(5'-phospho-RNA)-tyrosine modification. In terms of domain architecture, Peptidase C3 spans 1636–1829; it reads NPVMDFELFC…AATIITRELI (194 aa). Residues H1680, D1714, and C1793 each act as for protease 3C activity in the active site. The 119-residue stretch at 2071–2189 folds into the RdRp catalytic domain; sequence NYVYDVDYSN…GTNYQIDFNL (119 aa). Catalysis depends on for RdRp activity residues D2077 and D2175.

It belongs to the picornaviruses polyprotein family. In terms of assembly, interacts with host EIF4E. Interacts with the leader protein. Interacts with host RAN; the complex L-RAN recruits cellular kinases responsible for the L-induced nucleocytoplasmic trafficking inhibition. The complex L-RAN can further bind to the host exportins XPO1/CRM1 and CSE1L/CAS. Interacts with the protein 2A. Interacts with host RNASEL; this interaction prevents RNASEL activation by its substrate 2'-5' oligoadenylates. Phosphorylated. Post-translationally, specific enzymatic cleavages by the viral protease in vivo yield a variety of precursors and mature proteins. The polyprotein seems to be cotranslationally cleaved at the 2A/2B junction by a ribosomal skip from one codon to the next without formation of a peptide bond. This process would release the P1-2A peptide from the translational complex. In terms of processing, during virion maturation, immature virions are rendered infectious following cleavage of VP0 into VP4 and VP2. This maturation seems to be an autocatalytic event triggered by the presence of RNA in the capsid and is followed by a conformational change of the particle. Uridylylated by the polymerase and is covalently linked to the 5'-end of genomic RNA. This uridylylated form acts as a nucleotide-peptide primer for the polymerase. Post-translationally, myristoylation is required during RNA encapsidation and formation of the mature virus particle.

It is found in the virion. Its subcellular location is the host cytoplasm. It localises to the host nucleus. The protein localises to the host nucleolus. The protein resides in the host cytoplasmic vesicle membrane. The catalysed reaction is RNA(n) + a ribonucleoside 5'-triphosphate = RNA(n+1) + diphosphate. It catalyses the reaction ATP + H2O = ADP + phosphate + H(+). It carries out the reaction Selective cleavage of Gln-|-Gly bond in the poliovirus polyprotein. In other picornavirus reactions Glu may be substituted for Gln, and Ser or Thr for Gly.. Forms a complex with host RAN and probably binds to exportins carrying activated MAPK in order to mediate the hyperphosphorylation of host Phe/Gly containing nuclear pore proteins (Nups) resulting in cessation of active nucleocytoplasmic transport. Proteins with NLS signals fail to import, cellular mRNAs fail to export, and some proteins small enough for diffusion are not retained anymore (efflux). The resulting inhibition of cellular protein synthesis serves to ensure maximal viral gene expression and to evade host immune response. The leader protein also inhibits host interferon regulatory factor 3 (IRF3) dimerization, thereby blocking the transcriptional activation of IFN genes. Binds to host RNase L thereby preventing its activation by 2'-5' oligoadenylates in order to counteract the antiviral interferon-inducible OAS/RNase L pathway. Inhibits the integrated stress response (ISR) in the infected cell. Inhibits the host EIF2AK2/PKR by rendering this kinase unable to detect double-stranded RNA. Also impairs host stress granule formation probably by acting on a step downstream of EIF2AK2/PKR activation. Functionally, forms an icosahedral capsid of pseudo T=3 symmetry with capsid proteins VP2 and VP3. Together they form an icosahedral capsid composed of 60 copies of each VP1, VP2, and VP3, with a diameter of approximately 300 Angstroms. VP4 lies on the inner surface of the protein shell formed by VP1, VP2 and VP3. All the three latter proteins contain a beta-sheet structure called beta-barrel jelly roll. VP1 is situated at the 12 fivefold axes, whereas VP2 and VP3 are located at the quasi-sixfold axes. Its function is as follows. Lies on the inner surface of the capsid shell. After binding to the host receptor, the capsid undergoes conformational changes. Capsid protein VP4 is released, capsid protein VP1 N-terminus is externalized, and together, they shape a pore in the host membrane through which the viral genome is translocated into the host cell cytoplasm. After genome has been released, the channel shrinks. In terms of biological role, VP0 precursor is a component of immature procapsids. Involved in host translation shutoff by inhibiting cap-dependent mRNA translation. Nuclear localization is required for this function. The resulting inhibition of cellular protein synthesis serves to ensure maximal viral gene expression and to evade host immune response. Inhibits the phosphorylation of the leader protein. Binds to the RNA stem-loop essential for the ribosomal frameshift event and trans-activates the production of protein 2B*. Functionally, affects membrane integrity and causes an increase in membrane permeability. Its function is as follows. Associates with and induces structural rearrangements of intracellular membranes. It displays RNA-binding, nucleotide binding and NTPase activities. In terms of biological role, serves as membrane anchor via its hydrophobic domain. Forms a primer, VPg-pU, which is utilized by the polymerase for the initiation of RNA chains. Functionally, cysteine protease that generates mature viral proteins from the precursor polyprotein. In addition to its proteolytic activity, it binds to viral RNA, and thus influences viral genome replication. RNA and substrate cooperatively bind to the protease. Cleaves host PABP1, this cleavage is important for viral replication. Its function is as follows. Replicates the genomic and antigenomic RNAs by recognizing replications specific signals. Performs VPg uridylylation. In Mus musculus (Mouse), this protein is Genome polyprotein.